The primary structure comprises 424 residues: CinA-like protein (424 aa).

It belongs to the CinA family.

The chain is CinA-like protein from Prochlorococcus marinus (strain AS9601).